The following is a 114-amino-acid chain: Chaperone protein YscY (114 aa).

Binds to YscX.

Its subcellular location is the cytoplasm. Required for Yop secretion. Functions probably as a chaperone which stabilizes YscX within the cell, before its secretion. The polypeptide is Chaperone protein YscY (yscY) (Yersinia enterocolitica serotype O:8 / biotype 1B (strain NCTC 13174 / 8081)).